The chain runs to 249 residues: Probable amino-acid import ATP-binding protein YxeO (249 aa).

The ABC transporter domain occupies 2–239 (ITVKNIRKAF…PKNERTKRFI (238 aa)). 34 to 41 (GPSGSGKS) lines the ATP pocket.

Belongs to the ABC transporter superfamily. The complex is composed of two ATP-binding proteins (YxeO), two transmembrane proteins (YxeN) and a solute-binding protein (YxeM).

It localises to the cell membrane. Its function is as follows. Probably part of the ABC transporter complex YxeMNO that could be involved in amino-acid import. May transport S-methylcysteine. Responsible for energy coupling to the transport system. The chain is Probable amino-acid import ATP-binding protein YxeO (yxeO) from Bacillus subtilis (strain 168).